Consider the following 843-residue polypeptide: Protein P (843 aa).

The segment at 1–177 (MPLSYQHFRR…FCGSPYSWEQ (177 aa)) is terminal protein domain (TP). The interval 178–346 (ELQHGSTSLN…YCLSHIINLL (169 aa)) is spacer. Disordered regions lie at residues 180–202 (QHGSTSLNGEKGHGTEPFCAQSS) and 226–315 (QHKQ…VGSE). The span at 239 to 249 (RSGRLRSRVHT) shows a compositional bias: basic residues. Composition is skewed to polar residues over residues 262 to 277 (TGHSDNLATRSTSCFH) and 287 to 299 (PSLSTSKGHTSTG). The polymerase/reverse transcriptase domain (RT) stretch occupies residues 347–690 (EDWGPCYEHG…YMNLYPVARQ (344 aa)). The 244-residue stretch at 357–600 (EHHIRTPKTP…YSLHFMGYII (244 aa)) folds into the Reverse transcriptase domain. Mg(2+)-binding residues include aspartate 429, aspartate 551, and aspartate 552.

Belongs to the hepadnaviridae P protein family.

The catalysed reaction is DNA(n) + a 2'-deoxyribonucleoside 5'-triphosphate = DNA(n+1) + diphosphate. The enzyme catalyses Endonucleolytic cleavage to 5'-phosphomonoester.. Its activity is regulated as follows. Activated by host HSP70 and HSP40 in vitro to be able to bind the epsilon loop of the pgRNA. Because deletion of the RNase H region renders the protein partly chaperone-independent, the chaperones may be needed indirectly to relieve occlusion of the RNA-binding site by this domain. Inhibited by several reverse-transcriptase inhibitors: Lamivudine, Adefovir and Entecavir. Functionally, multifunctional enzyme that converts the viral RNA genome into dsDNA in viral cytoplasmic capsids. This enzyme displays a DNA polymerase activity that can copy either DNA or RNA templates, and a ribonuclease H (RNase H) activity that cleaves the RNA strand of RNA-DNA heteroduplexes in a partially processive 3'- to 5'-endonucleasic mode. Neo-synthesized pregenomic RNA (pgRNA) are encapsidated together with the P protein, and reverse-transcribed inside the nucleocapsid. Initiation of reverse-transcription occurs first by binding the epsilon loop on the pgRNA genome, and is initiated by protein priming, thereby the 5'-end of (-)DNA is covalently linked to P protein. Partial (+)DNA is synthesized from the (-)DNA template and generates the relaxed circular DNA (RC-DNA) genome. After budding and infection, the RC-DNA migrates in the nucleus, and is converted into a plasmid-like covalently closed circular DNA (cccDNA). The activity of P protein does not seem to be necessary for cccDNA generation, and is presumably released from (+)DNA by host nuclear DNA repair machinery. The sequence is that of Protein P from Hepatitis B virus genotype H (isolate United States/LAS2523/2002) (HBV-H).